Reading from the N-terminus, the 158-residue chain is Transcription factor BTF3 homolog 4 (158 aa).

The NAC-A/B domain maps to T33 to L98. A disordered region spans residues Q123–N158. Residues D134–P143 are compositionally biased toward acidic residues.

Belongs to the NAC-beta family.

The chain is Transcription factor BTF3 homolog 4 (btf3l4) from Xenopus laevis (African clawed frog).